A 198-amino-acid polypeptide reads, in one-letter code: Clytin (198 aa).

A propeptide spanning residues 1 to 9 (MADTASKYA) is cleaved from the precursor. EF-hand domains are found at residues 20-55 (KWVNRHKFMFNFLDINGDGKITLDEIVSKASDDICA), 60-95 (TPEQTKRHQDAVEAFFKKIGMDYGKEVEFPAFVDGW), 119-148 (EAVFDIFDKDGSGSISLDEWKAYGRISGIC), and 149-184 (SSDEDAEKTFKHCDLDNSGKLDVDEMTRQHLGFWYT). Ca(2+)-binding residues include aspartate 33, asparagine 35, aspartate 37, lysine 39, and glutamate 44. Ca(2+) contacts are provided by aspartate 126, aspartate 128, serine 130, serine 132, glutamate 137, aspartate 162, aspartate 164, serine 166, lysine 168, and glutamate 173.

It belongs to the aequorin family.

Functionally, ca(2+)-dependent bioluminescence photoprotein. Displays an emission peak at 470 nm (blue light). Trace amounts of calcium ion trigger the intramolecular oxidation of the chromophore, coelenterazine into coelenteramide and CO(2) with the concomitant emission of light. The polypeptide is Clytin (Clytia gregaria (Gregarious jellyfish)).